Consider the following 617-residue polypeptide: Solute carrier family 2, facilitated glucose transporter member 12 (617 aa).

The disordered stretch occupies residues 1 to 29; the sequence is MVPVENTEGPSLLNQKGTAVETEGSGSRH. Residues 1–44 are Cytoplasmic-facing; that stretch reads MVPVENTEGPSLLNQKGTAVETEGSGSRHPPWARGCGMFTFLSS. Over residues 8-17 the composition is skewed to polar residues; the sequence is EGPSLLNQKG. The chain crosses the membrane as a helical span at residues 45–65; sequence VTAAVSGLLVGYELGIISGAL. At 66–80 the chain is on the extracellular side; it reads LQIKTLLALSCHEQE. Residues 81 to 101 form a helical membrane-spanning segment; sequence MVVSSLVIGALLASLTGGVLI. The Cytoplasmic segment spans residues 102–115; that stretch reads DRYGRRTAIILSSC. The helical transmembrane segment at 116-136 threads the bilayer; that stretch reads LLGLGSLVLILSLSYTVLIVG. Residue Arg-137 is a topological domain, extracellular. A helical transmembrane segment spans residues 138 to 158; the sequence is IAIGVSISLSSIATCVYIAEI. The Cytoplasmic portion of the chain corresponds to 159–172; the sequence is APQHRRGLLVSLNE. A helical membrane pass occupies residues 173-193; it reads LMIVIGILSAYISNYAFANVF. Over 194–197 the chain is Extracellular; sequence HGWK. The chain crosses the membrane as a helical span at residues 198–218; that stretch reads YMFGLVIPLGVLQAIAMYFLP. The Cytoplasmic portion of the chain corresponds to 219-278; the sequence is PSPRFLVMKGQEGAASKVLGRLRALSDTTEELTVIKSSLKDEYQYSFWDLFRSKDNMRTR. The chain crosses the membrane as a helical span at residues 279-299; it reads IMIGLTLVFFVQITGQPNILF. The Extracellular portion of the chain corresponds to 300 to 317; the sequence is YASTVLKSVGFQSNEAAS. A helical transmembrane segment spans residues 318–338; the sequence is LASTGVGVVKVISTIPATLLV. Residues 339–345 lie on the Cytoplasmic side of the membrane; that stretch reads DHVGSKT. Residues 346–366 form a helical membrane-spanning segment; that stretch reads FLCIGSSVMAASLVTMGIVNL. Residues 367-466 are Extracellular-facing; the sequence is NIHMNFTHIC…PAFLKWLSLA (100 aa). N-linked (GlcNAc...) asparagine glycosylation is found at Asn-371, Asn-383, Asn-396, and Asn-401. The helical transmembrane segment at 467–487 threads the bilayer; sequence SLLVYVAAFSIGLGPMPWLVL. The Cytoplasmic portion of the chain corresponds to 488 to 498; the sequence is SEIFPGGIRGR. Residues 499–519 form a helical membrane-spanning segment; the sequence is AMALTSSMNWGINLLISLTFL. Over 520–528 the chain is Extracellular; that stretch reads TVTDLIGLP. A helical transmembrane segment spans residues 529–549; the sequence is WVCFIYTIMSLASLLFVVMFI. The Cytoplasmic segment spans residues 550–617; the sequence is PETKGCSLEQ…GQSRQLSPET (68 aa).

The protein belongs to the major facilitator superfamily. Sugar transporter (TC 2.A.1.1) family. Glucose transporter subfamily. As to expression, predominantly expressed in skeletal muscle, heart and prostate, with lower levels in brain, placenta and kidney.

It is found in the cell membrane. The protein resides in the endomembrane system. It localises to the cytoplasm. The protein localises to the perinuclear region. The catalysed reaction is D-glucose(out) = D-glucose(in). In terms of biological role, insulin-independent facilitative glucose transporter. The protein is Solute carrier family 2, facilitated glucose transporter member 12 of Homo sapiens (Human).